An 804-amino-acid polypeptide reads, in one-letter code: Protein translocase subunit SecA (804 aa).

ATP contacts are provided by residues glutamine 100, 118–122 (GEGKT), and aspartate 508.

The protein belongs to the SecA family. In terms of assembly, monomer and homodimer. Part of the essential Sec protein translocation apparatus which comprises SecA, SecYEG and auxiliary proteins SecDF. Other proteins may also be involved.

Its subcellular location is the cell membrane. The protein localises to the cytoplasm. It carries out the reaction ATP + H2O + cellular proteinSide 1 = ADP + phosphate + cellular proteinSide 2.. Its function is as follows. Part of the Sec protein translocase complex. Interacts with the SecYEG preprotein conducting channel. Has a central role in coupling the hydrolysis of ATP to the transfer of proteins into and across the cell membrane, serving as an ATP-driven molecular motor driving the stepwise translocation of polypeptide chains across the membrane. This Leuconostoc citreum (strain KM20) protein is Protein translocase subunit SecA.